The primary structure comprises 338 residues: Ketol-acid reductoisomerase (NADP(+)) (338 aa).

The region spanning 1–181 is the KARI N-terminal Rossmann domain; the sequence is MNVYYDRDCD…GGGRTGIIET (181 aa). Residues 24–27, R47, S50, S52, and 82–85 contribute to the NADP(+) site; these read YGSQ and DEFQ. The active site involves H107. G133 provides a ligand contact to NADP(+). Residues 182-327 form the KARI C-terminal knotted domain; the sequence is TFKDETETDL…GNLRAMMPWI (146 aa). Mg(2+) contacts are provided by D190, E194, E226, and E230. Residue S251 coordinates substrate.

Belongs to the ketol-acid reductoisomerase family. Mg(2+) serves as cofactor.

It catalyses the reaction (2R)-2,3-dihydroxy-3-methylbutanoate + NADP(+) = (2S)-2-acetolactate + NADPH + H(+). The catalysed reaction is (2R,3R)-2,3-dihydroxy-3-methylpentanoate + NADP(+) = (S)-2-ethyl-2-hydroxy-3-oxobutanoate + NADPH + H(+). Its pathway is amino-acid biosynthesis; L-isoleucine biosynthesis; L-isoleucine from 2-oxobutanoate: step 2/4. It participates in amino-acid biosynthesis; L-valine biosynthesis; L-valine from pyruvate: step 2/4. In terms of biological role, involved in the biosynthesis of branched-chain amino acids (BCAA). Catalyzes an alkyl-migration followed by a ketol-acid reduction of (S)-2-acetolactate (S2AL) to yield (R)-2,3-dihydroxy-isovalerate. In the isomerase reaction, S2AL is rearranged via a Mg-dependent methyl migration to produce 3-hydroxy-3-methyl-2-ketobutyrate (HMKB). In the reductase reaction, this 2-ketoacid undergoes a metal-dependent reduction by NADPH to yield (R)-2,3-dihydroxy-isovalerate. In Trichlorobacter lovleyi (strain ATCC BAA-1151 / DSM 17278 / SZ) (Geobacter lovleyi), this protein is Ketol-acid reductoisomerase (NADP(+)).